We begin with the raw amino-acid sequence, 295 residues long: Glutamyl-Q tRNA(Asp) synthetase (295 aa).

L-glutamate contacts are provided by residues 5–9 and Glu-41; that span reads RFAPS. Residues 8 to 18 carry the 'HIGH' region motif; sequence PSPTGLLHIGS. Zn(2+) is bound by residues Cys-97, Cys-99, Tyr-117, and Cys-121. Residues Tyr-178 and Arg-196 each contribute to the L-glutamate site. Positions 234–238 match the 'KMSKS' region motif; that stretch reads KWSKQ. Residue Lys-237 coordinates ATP.

It belongs to the class-I aminoacyl-tRNA synthetase family. GluQ subfamily. Zn(2+) is required as a cofactor.

Catalyzes the tRNA-independent activation of glutamate in presence of ATP and the subsequent transfer of glutamate onto a tRNA(Asp). Glutamate is transferred on the 2-amino-5-(4,5-dihydroxy-2-cyclopenten-1-yl) moiety of the queuosine in the wobble position of the QUC anticodon. The sequence is that of Glutamyl-Q tRNA(Asp) synthetase from Neisseria meningitidis serogroup C (strain 053442).